A 1114-amino-acid chain; its full sequence is TBC1 domain family member 8B (1114 aa).

2 GRAM domains span residues 145-212 (LKFE…EKTS) and 285-353 (EQFK…DKTD). A compositionally biased stretch (polar residues) spans 399 to 411 (TEVAVSSDSTGPS). The tract at residues 399 to 420 (TEVAVSSDSTGPSENFEEQPLT) is disordered. Residues 486–673 (GIPETLRGEL…NVVDCFFYDG (188 aa)) form the Rab-GAP TBC domain. In terms of domain architecture, EF-hand spans 857 to 892 (NRDSLALWTFRLLDENSDCLINFKEFSSAIDIMYNG). 2 disordered regions span residues 938–957 (SKPADEKETESGRNSPEKGK) and 1032–1061 (LHSPASSASTARDSGPSEGNAESSVKKDLP). The segment covering 940–957 (PADEKETESGRNSPEKGK) has biased composition (basic and acidic residues).

As to quaternary structure, interacts (via domain Rab-GAP TBC) with RAB11B (in GTP-bound form).

It localises to the cytoplasm. Its subcellular location is the cytosol. In terms of biological role, involved in vesicular recycling, probably as a RAB11B GTPase-activating protein. This chain is TBC1 domain family member 8B (Tbc1d8b), found in Mus musculus (Mouse).